The chain runs to 647 residues: Threonine--tRNA ligase (647 aa).

The 61-residue stretch at 1–61 (MIKITFPDGA…EEDGSIEIVT (61 aa)) folds into the TGS domain. The catalytic stretch occupies residues 240-538 (DHRKLGKELD…LIETYKGAFP (299 aa)). Zn(2+) contacts are provided by Cys334, His385, and His515.

It belongs to the class-II aminoacyl-tRNA synthetase family. As to quaternary structure, homodimer. It depends on Zn(2+) as a cofactor.

The protein resides in the cytoplasm. It carries out the reaction tRNA(Thr) + L-threonine + ATP = L-threonyl-tRNA(Thr) + AMP + diphosphate + H(+). Functionally, catalyzes the attachment of threonine to tRNA(Thr) in a two-step reaction: L-threonine is first activated by ATP to form Thr-AMP and then transferred to the acceptor end of tRNA(Thr). Also edits incorrectly charged L-seryl-tRNA(Thr). This Streptococcus pyogenes serotype M18 (strain MGAS8232) protein is Threonine--tRNA ligase.